The primary structure comprises 610 residues: Myoneurin (610 aa).

Residues 24–89 form the BTB domain; the sequence is CDCTIVIGEF…IYTGTLNLDS (66 aa). A disordered region spans residues 169-197; it reads QGALAKKSSQTKKKKKAFNSPKTGQNKTV. 2 short sequence motifs (nuclear localization signal) span residues 174–190 and 257–262; these read KKSSQTKKKKKAFNSPK and KRKRGK. Residues 188-197 show a composition bias toward polar residues; it reads SPKTGQNKTV. Phosphoserine is present on serine 289. 8 consecutive C2H2-type zinc fingers follow at residues 302-324, 330-352, 358-381, 387-409, 415-437, 443-465, 471-493, and 499-522; these read PMCNTCGKVFSEASSLRRHMRIH, YVCHLCGKAFTQCNQLKTHVRTH, YKCELCDKGFAQKCQLVFHSRMHH, YKCDVCNLQFATSSNLKIHARKH, YVCDRCGQRFAQASTLTYHVRRH, YVCDTCGKAFAVSSSLITHSRKH, YICGICGKSFISSGELNKHFRSH, and FICELCGNSYTDIKNLKKHKTKVH. A disordered region spans residues 521 to 556; it reads VHSGADKTLDSSAEDHTLSEQDSIQKSPLSETMDVK. Residues 523-539 are compositionally biased toward basic and acidic residues; that stretch reads SGADKTLDSSAEDHTLS. Over residues 540-550 the composition is skewed to polar residues; sequence EQDSIQKSPLS.

It belongs to the krueppel C2H2-type zinc-finger protein family. As to expression, mainly expressed in the neuromuscular system. Located in and around synaptic myonuclei in adult muscle. Expression is dysregulated after nerve injury. Also found in the testis, ovary and placenta.

It is found in the nucleus. The chain is Myoneurin (MYNN) from Homo sapiens (Human).